We begin with the raw amino-acid sequence, 110 residues long: Prothymosin alpha (110 aa).

Residue Met-1 is modified to N-acetylmethionine. The disordered stretch occupies residues 1 to 110 (MSDAAVDTSS…TKKQKTDEDD (110 aa)). Ser-2 carries the N-acetylserine; in Prothymosin alpha, N-terminally processed modification. Ser-2 bears the Phosphoserine mark. Thr-8 carries the post-translational modification Phosphothreonine; by CK2. 2 positions are modified to phosphoserine: Ser-9 and Ser-10. Residues Thr-13 and Thr-14 each carry the phosphothreonine; by CK2 modification. Over residues 13–31 (TTKDLKEKKEVVEEAENGR) the composition is skewed to basic and acidic residues. An N6-acetyllysine; alternate modification is found at Lys-15. At Lys-15 the chain carries N6-succinyllysine; alternate. Over residues 32 to 41 (EAPANGNANE) the composition is skewed to low complexity. Residues 42-83 (ENGEQEADNEVDEEEEEGGEEEEEEEEGDGEEEDGDEDEEAE) are compositionally biased toward acidic residues. The span at 100–110 (DTKKQKTDEDD) shows a compositional bias: basic and acidic residues. Thr-101 carries the phosphothreonine modification. The residue at position 102 (Lys-102) is an N6-acetyllysine; alternate. Lys-102 participates in a covalent cross-link: Glycyl lysine isopeptide (Lys-Gly) (interchain with G-Cter in SUMO2); alternate. Thr-106 bears the Phosphothreonine mark.

This sequence belongs to the pro/parathymosin family. As to quaternary structure, interacts with NUPR1; regulates apoptotic process. Covalently linked to a small RNA of about 20 nucleotides.

It is found in the nucleus. In terms of biological role, prothymosin alpha may mediate immune function by conferring resistance to certain opportunistic infections. This is Prothymosin alpha (PTMA) from Bos taurus (Bovine).